Here is a 230-residue protein sequence, read N- to C-terminus: V-type proton ATPase subunit E1 (230 aa).

Met-1 is modified (N-acetylmethionine). The stretch at 8 to 67 (RQIQQMVRFIRQEAEEKANEISVSAEEEFNIEKLQLVEAEKKKIRQDYEKKEKQADVRKK) forms a coiled coil. At Ser-178 the chain carries Phosphoserine.

The protein belongs to the V-ATPase E subunit family. V-ATPase is a heteromultimeric enzyme composed of a peripheral catalytic V1 complex (components A to H) attached to an integral membrane V0 proton pore complex (components: a, c, c'', d and e).

The protein localises to the vacuole membrane. In terms of biological role, subunit of the peripheral V1 complex of vacuolar ATPase essential for assembly or catalytic function. V-ATPase is responsible for acidifying a variety of intracellular compartments in eukaryotic cells. Required for Golgi organization and vacuole function in embryogenesis. This is V-type proton ATPase subunit E1 (VHA-E1) from Arabidopsis thaliana (Mouse-ear cress).